A 254-amino-acid polypeptide reads, in one-letter code: Isoprenyl transferase (254 aa).

Aspartate 12 is a catalytic residue. Residue aspartate 12 coordinates Mg(2+). Substrate-binding positions include 13–16 (GNGR), tryptophan 17, arginine 25, histidine 29, and 57–59 (SSE). Asparagine 60 (proton acceptor) is an active-site residue. Residues tryptophan 61, arginine 63, arginine 180, and 186-188 (RLS) contribute to the substrate site. Residue glutamate 199 coordinates Mg(2+).

Belongs to the UPP synthase family. Homodimer. Mg(2+) serves as cofactor.

Its function is as follows. Catalyzes the condensation of isopentenyl diphosphate (IPP) with allylic pyrophosphates generating different type of terpenoids. The sequence is that of Isoprenyl transferase from Brucella abortus biovar 1 (strain 9-941).